The sequence spans 448 residues: GTPase Der (448 aa).

2 EngA-type G domains span residues 2–171 and 181–364; these read FTVV…PDTQ and PKIA…EEYS. GTP is bound by residues 8–15, 58–62, 123–126, 187–194, 234–238, and 305–308; these read GRPNVGKS, DTGGF, NKID, DTAGI, and NKWD. In terms of domain architecture, KH-like spans 365–448; sequence KRVSTSELNR…PINIKIKQRK (84 aa).

It belongs to the TRAFAC class TrmE-Era-EngA-EngB-Septin-like GTPase superfamily. EngA (Der) GTPase family. In terms of assembly, associates with the 50S ribosomal subunit.

In terms of biological role, GTPase that plays an essential role in the late steps of ribosome biogenesis. This is GTPase Der from Thermodesulfovibrio yellowstonii (strain ATCC 51303 / DSM 11347 / YP87).